A 143-amino-acid chain; its full sequence is Peptide methionine sulfoxide reductase MsrB (143 aa).

Positions 16–139 (DAELRRRLTP…NSAALNFESR (124 aa)) constitute a MsrB domain. Zn(2+) contacts are provided by Cys55, Cys58, Cys104, and Cys107. Residue Cys128 is the Nucleophile of the active site.

This sequence belongs to the MsrB Met sulfoxide reductase family. Zn(2+) serves as cofactor.

It carries out the reaction L-methionyl-[protein] + [thioredoxin]-disulfide + H2O = L-methionyl-(R)-S-oxide-[protein] + [thioredoxin]-dithiol. The protein is Peptide methionine sulfoxide reductase MsrB of Burkholderia multivorans (strain ATCC 17616 / 249).